Reading from the N-terminus, the 293-residue chain is Pyridoxal 5'-phosphate synthase subunit PdxS (293 aa).

Asp-23 provides a ligand contact to D-ribose 5-phosphate. Lys-80 (schiff-base intermediate with D-ribose 5-phosphate) is an active-site residue. Gly-152 provides a ligand contact to D-ribose 5-phosphate. A D-glyceraldehyde 3-phosphate-binding site is contributed by Arg-164. D-ribose 5-phosphate-binding positions include Gly-213 and 234 to 235; that span reads GS.

This sequence belongs to the PdxS/SNZ family. In the presence of PdxT, forms a dodecamer of heterodimers.

The enzyme catalyses aldehydo-D-ribose 5-phosphate + D-glyceraldehyde 3-phosphate + L-glutamine = pyridoxal 5'-phosphate + L-glutamate + phosphate + 3 H2O + H(+). Its pathway is cofactor biosynthesis; pyridoxal 5'-phosphate biosynthesis. Functionally, catalyzes the formation of pyridoxal 5'-phosphate from ribose 5-phosphate (RBP), glyceraldehyde 3-phosphate (G3P) and ammonia. The ammonia is provided by the PdxT subunit. Can also use ribulose 5-phosphate and dihydroxyacetone phosphate as substrates, resulting from enzyme-catalyzed isomerization of RBP and G3P, respectively. The sequence is that of Pyridoxal 5'-phosphate synthase subunit PdxS from Roseiflexus sp. (strain RS-1).